A 146-amino-acid polypeptide reads, in one-letter code: NADPH-dependent 7-cyano-7-deazaguanine reductase (146 aa).

Residue Cys-48 is the Thioimide intermediate of the active site. Asp-55 acts as the Proton donor in catalysis. Residues 70 to 72 (VES) and 89 to 90 (HE) each bind substrate.

It belongs to the GTP cyclohydrolase I family. QueF type 1 subfamily.

The protein localises to the cytoplasm. It carries out the reaction 7-aminomethyl-7-carbaguanine + 2 NADP(+) = 7-cyano-7-deazaguanine + 2 NADPH + 3 H(+). It participates in tRNA modification; tRNA-queuosine biosynthesis. Catalyzes the NADPH-dependent reduction of 7-cyano-7-deazaguanine (preQ0) to 7-aminomethyl-7-deazaguanine (preQ1). This chain is NADPH-dependent 7-cyano-7-deazaguanine reductase, found in Helicobacter pylori (strain Shi470).